The primary structure comprises 622 residues: Pyranose 2-oxidase (622 aa).

An N-terminal signal peptide occupies residues 1–28; that stretch reads MSASSSDPFHSFAKTSFTSKAAKRATAH. A propeptide spanning residues 29–37 is cleaved from the precursor; it reads SLPPLPGPG. Position 167 is a tele-8alpha-FAD histidine (H167). The substrate site is built by Q449 and H451. The active-site Proton acceptor is H546. The active site involves N591.

The protein belongs to the GMC oxidoreductase family. Homotetramer. It depends on FAD as a cofactor.

The protein localises to the periplasm. It catalyses the reaction D-glucose + O2 = 2-dehydro-D-glucose + H2O2. Functionally, catalyzes the oxidation of various aldopyranoses and disaccharides on carbon-2 to the corresponding 2-keto sugars concomitant with the reduction of O(2) to H(2)O(2). Plays an important role in lignin degradation of wood rot fungi by supplying the essential cosubstrate H(2)O(2) for the ligninolytic peroxidases, lignin peroxidase and manganese-dependent peroxidase. The preferred substrate is D-glucose which is converted to 2-dehydro-D-glucose, an intermediate of a secondary metabolic pathway leading to the antibiotic cortalcerone. Also acts on D-xylose, together with D-glucose the major sugars derived from wood, on L-sorbose, D-galactose and 1,5-anhydroglucitol, a diagnostic marker of diabetes mellitus. In Trametes hirsuta (White-rot fungus), this protein is Pyranose 2-oxidase (P2OX).